A 246-amino-acid chain; its full sequence is Phosphomannomutase 2 (246 aa).

A2 carries the post-translational modification N-acetylalanine. D12 (nucleophile) is an active-site residue. Positions 12 and 14 each coordinate Mg(2+). The active-site Proton donor/acceptor is the D14. 6 residues coordinate alpha-D-mannose 1-phosphate: R21, R123, R134, R141, S179, and D181. The Mg(2+) site is built by D209, F221, D223, and T226.

Belongs to the eukaryotic PMM family. As to quaternary structure, homodimer.

The protein resides in the cytoplasm. The enzyme catalyses alpha-D-mannose 1-phosphate = D-mannose 6-phosphate. Its pathway is nucleotide-sugar biosynthesis; GDP-alpha-D-mannose biosynthesis; alpha-D-mannose 1-phosphate from D-fructose 6-phosphate: step 2/2. Involved in the synthesis of the GDP-mannose and dolichol-phosphate-mannose required for a number of critical mannosyl transfer reactions. This Bos taurus (Bovine) protein is Phosphomannomutase 2 (PMM2).